The following is a 365-amino-acid chain: NADH-quinone oxidoreductase subunit H 2 (365 aa).

Transmembrane regions (helical) follow at residues 1 to 21, 71 to 91, 100 to 120, 136 to 156, 199 to 219, 254 to 274, 301 to 321, and 342 to 362; these read MFVV…VVWA, LAPV…PFAP, VGVF…FLAG, IAQV…VVLI, FVSW…VFFI, ILFL…VVLF, IAGY…VVFL, and WKIL…WVVW.

It belongs to the complex I subunit 1 family. NDH-1 is composed of 14 different subunits. Subunits NuoA, H, J, K, L, M, N constitute the membrane sector of the complex.

It is found in the cell inner membrane. It catalyses the reaction a quinone + NADH + 5 H(+)(in) = a quinol + NAD(+) + 4 H(+)(out). In terms of biological role, NDH-1 shuttles electrons from NADH, via FMN and iron-sulfur (Fe-S) centers, to quinones in the respiratory chain. The immediate electron acceptor for the enzyme in this species is believed to be ubiquinone. Couples the redox reaction to proton translocation (for every two electrons transferred, four hydrogen ions are translocated across the cytoplasmic membrane), and thus conserves the redox energy in a proton gradient. This subunit may bind ubiquinone. This is NADH-quinone oxidoreductase subunit H 2 from Cytophaga hutchinsonii (strain ATCC 33406 / DSM 1761 / CIP 103989 / NBRC 15051 / NCIMB 9469 / D465).